The sequence spans 263 residues: Pro-opiomelanocortin (263 aa).

Residues 1–26 (MLQPVWHACILAILGVFIFHVGEVRS) form the signal peptide. Pyrrolidone carboxylic acid is present on Gln-27. Residue Phe-87 is modified to Phenylalanine amide. Residue Asn-91 is glycosylated (N-linked (GlcNAc...) asparagine). A propeptide spanning residues 107-141 (EDIANYPILNLFLGSDNQNTQEGIMEDDALDRQDS) is cleaved from the precursor. Position 156 is a valine amide (Val-156).

The protein belongs to the POMC family. In terms of processing, specific enzymatic cleavages at paired basic residues yield the different active peptides.

The protein resides in the secreted. Its function is as follows. Stimulates the adrenal glands to release cortisol. Functionally, anorexigenic peptide. Increases the pigmentation of skin by increasing melanin production in melanocytes. In terms of biological role, increases the pigmentation of skin by increasing melanin production in melanocytes. Endogenous orexigenic opiate. Its function is as follows. Endogenous opiate. This Aquarana catesbeiana (American bullfrog) protein is Pro-opiomelanocortin (pomc).